Consider the following 150-residue polypeptide: Macrodomain Ter protein (150 aa).

This sequence belongs to the MatP family. In terms of assembly, homodimer.

The protein resides in the cytoplasm. Required for spatial organization of the terminus region of the chromosome (Ter macrodomain) during the cell cycle. Prevents early segregation of duplicated Ter macrodomains during cell division. Binds specifically to matS, which is a 13 bp signature motif repeated within the Ter macrodomain. The polypeptide is Macrodomain Ter protein (Klebsiella pneumoniae (strain 342)).